We begin with the raw amino-acid sequence, 112 residues long: Ribonuclease P protein component (112 aa).

This sequence belongs to the RnpA family. Consists of a catalytic RNA component (M1 or rnpB) and a protein subunit.

The catalysed reaction is Endonucleolytic cleavage of RNA, removing 5'-extranucleotides from tRNA precursor.. RNaseP catalyzes the removal of the 5'-leader sequence from pre-tRNA to produce the mature 5'-terminus. It can also cleave other RNA substrates such as 4.5S RNA. The protein component plays an auxiliary but essential role in vivo by binding to the 5'-leader sequence and broadening the substrate specificity of the ribozyme. The sequence is that of Ribonuclease P protein component from Mesomycoplasma hyopneumoniae (strain 7448) (Mycoplasma hyopneumoniae).